The sequence spans 210 residues: MADVKELKQVLTGPIINNNPIALQILGVCSALAVTSKMETALVMSLALTVVTAFSNLFISLIRNHIPSSVRIIVQMTIIASLVIVVDQVLQAYAYEIAKQLSVFVGLIITNCIVMGRAEAYAMKTPPMMSFMDGIGNGLGYGAILLGVGFFRELFGNGSLFGIEILSKISDGGWYQPNGLLLLPPSAFFLIGGLIWVIRTYKPEQVEAKG.

The next 6 membrane-spanning stretches (helical) occupy residues 14-34 (PIIN…ALAV), 42-62 (LVMS…ISLI), 72-92 (IIVQ…VLQA), 96-116 (EIAK…IVMG), 131-151 (FMDG…VGFF), and 178-198 (NGLL…IWVI).

Belongs to the NqrDE/RnfAE family. In terms of assembly, composed of six subunits; NqrA, NqrB, NqrC, NqrD, NqrE and NqrF.

It is found in the cell inner membrane. The catalysed reaction is a ubiquinone + n Na(+)(in) + NADH + H(+) = a ubiquinol + n Na(+)(out) + NAD(+). Its function is as follows. NQR complex catalyzes the reduction of ubiquinone-1 to ubiquinol by two successive reactions, coupled with the transport of Na(+) ions from the cytoplasm to the periplasm. NqrA to NqrE are probably involved in the second step, the conversion of ubisemiquinone to ubiquinol. This Shewanella denitrificans (strain OS217 / ATCC BAA-1090 / DSM 15013) protein is Na(+)-translocating NADH-quinone reductase subunit D.